A 272-amino-acid polypeptide reads, in one-letter code: GPN-loop GTPase 3 (272 aa).

GTP is bound at residue 13–18; it reads GAGKST. The short motif at 70–72 is the Gly-Pro-Asn (GPN)-loop; involved in dimer interface element; sequence GPN. GTP is bound at residue 173–176; that stretch reads SKLD.

This sequence belongs to the GPN-loop GTPase family. Heterodimers with NPA3/GPN1 or GPN2. Binds to RNA polymerase II (RNAPII).

In terms of biological role, small GTPase required for proper nuclear localization of RNA polymerase II and III (RNAPII and RNAPIII). May act at an RNAP assembly step prior to nuclear import. Promotes sister chromatid separation during anaphase. This chain is GPN-loop GTPase 3, found in Saccharomyces cerevisiae (strain ATCC 204508 / S288c) (Baker's yeast).